Reading from the N-terminus, the 141-residue chain is Endoribonuclease YbeY (141 aa).

3 residues coordinate Zn(2+): His-100, His-104, and His-110.

This sequence belongs to the endoribonuclease YbeY family. Requires Zn(2+) as cofactor.

It localises to the cytoplasm. Functionally, single strand-specific metallo-endoribonuclease involved in late-stage 70S ribosome quality control and in maturation of the 3' terminus of the 16S rRNA. This chain is Endoribonuclease YbeY, found in Helicobacter pylori (strain J99 / ATCC 700824) (Campylobacter pylori J99).